A 375-amino-acid polypeptide reads, in one-letter code: Neuropeptide Y receptor type 4-2 (375 aa).

The Extracellular segment spans residues 1-39 (MNTSHLLALLLPKSPQGENRSKPLGTPYNFSEHCQDSVD). N-linked (GlcNAc...) asparagine glycans are attached at residues N2, N19, and N29. A helical transmembrane segment spans residues 40–60 (VMVFIVTSYSIETVVGVLGNL). At 61–87 (CLMCVTVRQKEKANVTNLLIANLAFSD) the chain is on the cytoplasmic side. Residues 88–108 (FLMCLLCQPLTAVYTIMDYWI) form a helical membrane-spanning segment. The Extracellular segment spans residues 109–116 (FGETLCKM). An intrachain disulfide couples C114 to C201. The helical transmembrane segment at 117-137 (SAFIQCMSVTVSILSLVLVAL) threads the bilayer. At 138–155 (ERHQLIINPTGWKPSISQ) the chain is on the cytoplasmic side. A helical transmembrane segment spans residues 156–176 (AYLGIVLIWVIACVLSLPFLA). At 177–212 (NSILENVFHKNHSKALEFLADKVVCTESWPLAHHRT) the chain is on the extracellular side. The N-linked (GlcNAc...) asparagine glycan is linked to N187. The helical transmembrane segment at 213 to 233 (IYTTFLLLFQYCLPLGFILVC) threads the bilayer. The Cytoplasmic segment spans residues 234–263 (YARIYRRLQRQGRVFHKGTYSLRAGHMKQV). Residues 264–284 (NVVLVVMVVAFAVLWLPLHVF) traverse the membrane as a helical segment. The Extracellular segment spans residues 285-301 (NSLEDWHHEAIPICHGN). A helical transmembrane segment spans residues 302-322 (LIFLVCHLLAMASTCVNPFIY). The Cytoplasmic segment spans residues 323 to 375 (GFLNTNFKKEIKALVLTCQQSAPLEESEHLPLSTVHTEVSKGSLRLSGRSNPI). C340 is lipidated: S-palmitoyl cysteine.

The protein belongs to the G-protein coupled receptor 1 family.

Its subcellular location is the cell membrane. In terms of biological role, g protein-coupled receptor for PPY/pancreatic polypeptide/PP, NPY/neuropeptide Y and PYY/peptide YY that is negatively coupled to cAMP. The rank order of affinity for these polypeptides and their derivatives is PP, PP (2-36) and [Ile-31, Gln-34] PP &gt; [Pro-34] PYY &gt; PYY and [Leu-31, Pro-34] NPY &gt; NPY &gt; PYY (3-36) and NPY (2-36) &gt; PP (13-36) &gt; PP (31-36) &gt; NPY free acid. The polypeptide is Neuropeptide Y receptor type 4-2 (Homo sapiens (Human)).